Here is a 746-residue protein sequence, read N- to C-terminus: Polyribonucleotide nucleotidyltransferase (746 aa).

Mg(2+) contacts are provided by Asp-493 and Asp-499. Residues 560 to 619 (PRIITLQINPEKIGALIGPGGKTIRSITEATGAQIDIEEDGRVYISTADAAAAQQAVAMV) enclose the KH domain. An S1 motif domain is found at 629-698 (GDIFLGKVVR…GTGKVSLSRR (70 aa)). Positions 704–746 (ETAEDRRAAGAGRGLRDGGRSSGSERSGDRSPRSDDRPRPRRR) are disordered. Composition is skewed to basic and acidic residues over residues 706–722 (AEDRRAAGAGRGLRDGG) and 729–746 (RSGDRSPRSDDRPRPRRR).

This sequence belongs to the polyribonucleotide nucleotidyltransferase family. The cofactor is Mg(2+).

Its subcellular location is the cytoplasm. It catalyses the reaction RNA(n+1) + phosphate = RNA(n) + a ribonucleoside 5'-diphosphate. In terms of biological role, involved in mRNA degradation. Catalyzes the phosphorolysis of single-stranded polyribonucleotides processively in the 3'- to 5'-direction. The protein is Polyribonucleotide nucleotidyltransferase of Roseiflexus castenholzii (strain DSM 13941 / HLO8).